The chain runs to 445 residues: tRNA(Ile)-lysidine synthase (445 aa).

Residue 33–38 participates in ATP binding; sequence SGGLDS.

This sequence belongs to the tRNA(Ile)-lysidine synthase family.

The protein localises to the cytoplasm. It carries out the reaction cytidine(34) in tRNA(Ile2) + L-lysine + ATP = lysidine(34) in tRNA(Ile2) + AMP + diphosphate + H(+). Ligates lysine onto the cytidine present at position 34 of the AUA codon-specific tRNA(Ile) that contains the anticodon CAU, in an ATP-dependent manner. Cytidine is converted to lysidine, thus changing the amino acid specificity of the tRNA from methionine to isoleucine. The chain is tRNA(Ile)-lysidine synthase from Pseudomonas syringae pv. tomato (strain ATCC BAA-871 / DC3000).